The chain runs to 908 residues: SKI/DACH domain-containing protein 1 (908 aa).

Residues 337–353 show a composition bias toward basic residues; the sequence is HHHHHHHHHHHHHHHRA. Residues 337-461 form a disordered region; it reads HHHHHHHHHH…SSSGSSQVSV (125 aa). Composition is skewed to low complexity over residues 370-389 and 396-410; these read PHLGSFPESCSSDSESSSYS and SDFGSSLSSSSNSVS. Residues 411 to 429 are compositionally biased toward acidic residues; sequence SEEEEEEGEEEEEEEEEEG. The segment covering 449-461 has biased composition (low complexity); the sequence is ESDSSSGSSQVSV. A Glycyl lysine isopeptide (Lys-Gly) (interchain with G-Cter in SUMO2) cross-link involves residue Lys-688. Disordered stretches follow at residues 744–763 and 792–818; these read ETPSLNPLAQSQGLSCTLGS and LQTPPVKPNLKSARSPRPTGKTETNEG. A compositionally biased stretch (polar residues) spans 746–761; it reads PSLNPLAQSQGLSCTL.

The protein belongs to the DACH/dachshund family.

This is SKI/DACH domain-containing protein 1 (SKIDA1) from Homo sapiens (Human).